We begin with the raw amino-acid sequence, 260 residues long: BTB/POZ domain-containing protein KCTD21 (260 aa).

The 70-residue stretch at 3–72 folds into the BTB domain; it reads DPITLNVGGK…LRTSHLDLPE (70 aa). Residues 88 to 112 are a coiled coil; the sequence is QVQPLIEALQEKEVELSKAEKNAML.

Homopentamer. Interacts with KCTD11; KCTD21 and KCTD11 may associate in pentameric assemblies. Interacts (via BTB domain) with CUL3; indicative for a participation in a BCR (BTB-CUL3-RBX1) E3 ubiquitin-protein ligase complex. Highly expressed in cerebellum and brain. Expressed in adult cerebellum (at protein level).

Its pathway is protein modification; protein ubiquitination. Functionally, probable substrate-specific adapter of a BCR (BTB-CUL3-RBX1) E3 ubiquitin-protein ligase complex mediating the ubiquitination and subsequent proteasomal degradation of target proteins. Promotes the ubiquitination of HDAC1. Can function as antagonist of the Hedgehog pathway by affecting the nuclear transfer of transcription factor GLI1; the function probably occurs via HDAC1 down-regulation, keeping GLI1 acetylated and inactive. Inhibits cell growth and tumorigenicity of medulloblastoma (MDB). The protein is BTB/POZ domain-containing protein KCTD21 (Kctd21) of Mus musculus (Mouse).